A 155-amino-acid polypeptide reads, in one-letter code: 1,4-dihydroxy-2-naphthoyl-CoA hydrolase (155 aa).

Asp-27 is an active-site residue.

Belongs to the 4-hydroxybenzoyl-CoA thioesterase family. DHNA-CoA hydrolase subfamily.

The enzyme catalyses 1,4-dihydroxy-2-naphthoyl-CoA + H2O = 1,4-dihydroxy-2-naphthoate + CoA + H(+). Its pathway is cofactor biosynthesis; phylloquinone biosynthesis. It participates in quinol/quinone metabolism; 1,4-dihydroxy-2-naphthoate biosynthesis; 1,4-dihydroxy-2-naphthoate from chorismate: step 7/7. Catalyzes the hydrolysis of 1,4-dihydroxy-2-naphthoyl-CoA (DHNA-CoA) to 1,4-dihydroxy-2-naphthoate (DHNA), a reaction involved in phylloquinone (vitamin K1) biosynthesis. The polypeptide is 1,4-dihydroxy-2-naphthoyl-CoA hydrolase (Prochlorococcus marinus (strain NATL2A)).